The following is a 62-amino-acid chain: UPF0434 protein Arad_4458 (62 aa).

The protein belongs to the UPF0434 family.

The chain is UPF0434 protein Arad_4458 from Rhizobium rhizogenes (strain K84 / ATCC BAA-868) (Agrobacterium radiobacter).